Consider the following 754-residue polypeptide: 5-methyltetrahydropteroyltriglutamate--homocysteine methyltransferase (754 aa).

Residues 19–22 and lysine 121 contribute to the 5-methyltetrahydropteroyltri-L-glutamate site; that span reads RELK. L-homocysteine-binding positions include 423 to 425 and glutamate 476; that span reads IGS. Residues 423-425 and glutamate 476 each bind L-methionine; that span reads IGS. Residues 507 to 508 and tryptophan 553 each bind 5-methyltetrahydropteroyltri-L-glutamate; that span reads RC. An L-homocysteine-binding site is contributed by aspartate 591. Aspartate 591 provides a ligand contact to L-methionine. Glutamate 597 is a binding site for 5-methyltetrahydropteroyltri-L-glutamate. Zn(2+)-binding residues include histidine 633, cysteine 635, and glutamate 657. The active-site Proton donor is the histidine 686. Cysteine 718 is a Zn(2+) binding site.

This sequence belongs to the vitamin-B12 independent methionine synthase family. Zn(2+) is required as a cofactor.

The catalysed reaction is 5-methyltetrahydropteroyltri-L-glutamate + L-homocysteine = tetrahydropteroyltri-L-glutamate + L-methionine. It participates in amino-acid biosynthesis; L-methionine biosynthesis via de novo pathway; L-methionine from L-homocysteine (MetE route): step 1/1. In terms of biological role, catalyzes the transfer of a methyl group from 5-methyltetrahydrofolate to homocysteine resulting in methionine formation. This Corynebacterium efficiens (strain DSM 44549 / YS-314 / AJ 12310 / JCM 11189 / NBRC 100395) protein is 5-methyltetrahydropteroyltriglutamate--homocysteine methyltransferase.